A 469-amino-acid polypeptide reads, in one-letter code: 6-phosphogluconate dehydrogenase, NADP(+)-dependent, decarboxylating (469 aa).

NADP(+)-binding positions include 10 to 15 (GLAVMG), 33 to 35 (NRS), 74 to 76 (VKA), and asparagine 102. Substrate contacts are provided by residues asparagine 102 and 128–130 (SGG). Lysine 182 serves as the catalytic Proton acceptor. 185–186 (HN) contacts substrate. Glutamate 189 (proton donor) is an active-site residue. Positions 190, 260, 287, 446, and 452 each coordinate substrate.

The protein belongs to the 6-phosphogluconate dehydrogenase family. In terms of assembly, homodimer.

It carries out the reaction 6-phospho-D-gluconate + NADP(+) = D-ribulose 5-phosphate + CO2 + NADPH. Its pathway is carbohydrate degradation; pentose phosphate pathway; D-ribulose 5-phosphate from D-glucose 6-phosphate (oxidative stage): step 3/3. Catalyzes the oxidative decarboxylation of 6-phosphogluconate to ribulose 5-phosphate and CO(2), with concomitant reduction of NADP to NADPH. Is the predominant 6-P-gluconate dehydrogenase isoenzyme in B.subtilis during growth on glucose and gluconate. In Bacillus subtilis (strain 168), this protein is 6-phosphogluconate dehydrogenase, NADP(+)-dependent, decarboxylating (gndA).